A 347-amino-acid chain; its full sequence is NADH-ubiquinone oxidoreductase chain 2 (347 aa).

Transmembrane regions (helical) follow at residues 3-23 (PMIL…VMMS), 25-45 (HWFL…PVLM), 59-79 (YFLT…INLI), 96-116 (TLLT…FWVP), 122-142 (VSLN…LSLL), 149-169 (VNTN…GWGG), 178-198 (IMAY…IYNP), 201-221 (SLLN…LLMF), 239-259 (IITT…PLSG), 274-294 (DSVI…FFYM), and 326-346 (MTSL…AMIL).

It belongs to the complex I subunit 2 family. Core subunit of respiratory chain NADH dehydrogenase (Complex I) which is composed of 45 different subunits. Interacts with TMEM242.

The protein localises to the mitochondrion inner membrane. It catalyses the reaction a ubiquinone + NADH + 5 H(+)(in) = a ubiquinol + NAD(+) + 4 H(+)(out). Its function is as follows. Core subunit of the mitochondrial membrane respiratory chain NADH dehydrogenase (Complex I) which catalyzes electron transfer from NADH through the respiratory chain, using ubiquinone as an electron acceptor. Essential for the catalytic activity and assembly of complex I. This Sylvisorex johnstoni (Johnston's forest shrew) protein is NADH-ubiquinone oxidoreductase chain 2.